The chain runs to 102 residues: Acid shock protein (102 aa).

A signal peptide spans 1–21; sequence MKKVLGLVVAAAMGLSSAAFA. A compositionally biased stretch (low complexity) spans 22–41; it reads AETATTPAPTATTTKAAPAK. A propeptide spanning residues 22–58 is cleaved from the precursor; the sequence is AETATTPAPTATTTKAAPAKTTHHKKQHKAAPAQKAQ. The segment at 22–102 is disordered; it reads AETATTPAPT…PAKPAAQPAA (81 aa). A compositionally biased stretch (basic residues) spans 80–90; sequence AAKKHAGKHSH. Over residues 91 to 102 the composition is skewed to low complexity; the sequence is QQPAKPAAQPAA.

Belongs to the Asr family. Post-translationally, proteolytic processing gives rise to the active protein.

The protein resides in the periplasm. Required for growth and/or survival at acidic conditions. This Escherichia coli (strain SE11) protein is Acid shock protein.